The following is a 1097-amino-acid chain: MGLKVIQQNVHKFLQLRFWGWWKLYNKVKPLLNVARQEEEMKAKEEELRKAMAQTQELVNKVKELEEKTATLSQEKNDLTIQLQAEQENLMDAEERLTWMMKTKMDLESQISDMRERLEEEEGMAASLSAAKRKLEGELSDLKRDLEGLETTLAKTEKEKQALDHKVRTLTGDLSLREDSITKLQKEKRALEELHQKTLDDLQAEEDKVNHLTKNNSKLSTQIHELEDNWEQEKKIRAEVEKARRKAESDLKMTIDNLNEMERSKLDLEEVVKKRDLEINSVNSKYEDEQSLNSTLQRKLKEHQDRIEELEEELEAERAMRAKIEQNRKREAELLKLRRELEEAALQSEATASTLRKKHVDSMAELTEHVESLQRVKSKLEKDKQVMKAEIDDLNASMETIQKSKMNAEAHVRKLEDSLSEANAKVAELERNQAEINAIRTRLQAENSELSREYEESQSRLNQILRIKTSLTSQVDDYKRQLDEESKSRSTAVVSLANTKHDLDLVKEQLEEEQGGKSELQRLVSKLNTEVTTWRTKYETDAIQRTEELEETKRKLAARLQEAEEAAETAQARAASLEKNKQRLQAEVEDLTIDLEKANAAAAALDKKQRLFDKMLAEWQQKCEELQVEVDSSQKECRMYMTESFKIKTAYEESLEHLESVKKENKTLQEEIKDLIDQLGEGGRSVHELQKLKKKLEMEKEELQVALEEAESSLEVEESKVIRIQLELAQVKADIDRRIHEKEEEFEATRKNHQRAIESLQASLEAEAKGRAEALRLKKKMETDLNEMEIQLDHANKNNSELVKTLKRLQQQIKDLQVQMDEDARQHEELRKQYNLQERRLSLLQTELEEVRSALEGSERSRKLLEQEVVEITEWHNEINIQNQSLLVVKRKLESDVQRISNEHEELISEFRLTEERAKKAMMDAARMAEELRQEQDHCMHLEKIKKNYEVTIKDLQAKMEEAEQLALKGGKRTIMKLEARIKELETELDGEQKQHVETVKTLCKNERRLKELVFQTEEDHKTNQRMQALVEKLQNKLKVYKRQIEEAEDQANQTLARYRKTVHELDDAEDRAGMAETALNKLRTRHRVAGKGITSV.

The stretch at 31-1087 (LLNVARQEEE…TALNKLRTRH (1057 aa)) forms a coiled coil.

Belongs to the TRAFAC class myosin-kinesin ATPase superfamily. Myosin family. In terms of tissue distribution, specifically expressed in muscles of the head including temporalis and tensor veli palatini.

Functionally, has most probably lost the function in masticatory muscles contraction suspected for its homologs in dog (AC F1PT61) and apes. This is an uncharacterized protein from Homo sapiens (Human).